A 364-amino-acid chain; its full sequence is F-box/kelch-repeat protein At3g23880 (364 aa).

Residues Met-8–His-54 form the F-box domain. 2 Kelch repeats span residues Asp-169–Gly-215 and Ile-216–Asp-265.

The protein is F-box/kelch-repeat protein At3g23880 of Arabidopsis thaliana (Mouse-ear cress).